A 185-amino-acid chain; its full sequence is Threonylcarbamoyl-AMP synthase (185 aa).

Residues 1–185 (MDNLQQVVSA…AFSDTVLRQG (185 aa)) enclose the YrdC-like domain.

This sequence belongs to the SUA5 family. TsaC subfamily.

The protein localises to the cytoplasm. The catalysed reaction is L-threonine + hydrogencarbonate + ATP = L-threonylcarbamoyladenylate + diphosphate + H2O. In terms of biological role, required for the formation of a threonylcarbamoyl group on adenosine at position 37 (t(6)A37) in tRNAs that read codons beginning with adenine. Catalyzes the conversion of L-threonine, HCO(3)(-)/CO(2) and ATP to give threonylcarbamoyl-AMP (TC-AMP) as the acyladenylate intermediate, with the release of diphosphate. The sequence is that of Threonylcarbamoyl-AMP synthase from Photobacterium profundum (strain SS9).